The chain runs to 669 residues: Epithelial sodium channel subunit gamma (669 aa).

Topologically, residues 1–67 (MAPPYHGDTR…VVSRGRLRKF (67 aa)) are cytoplasmic. The chain crosses the membrane as a helical span at residues 68–88 (IWILLTLSAVGLILWQCAELI). The Extracellular portion of the chain corresponds to 89 to 551 (MSYYTASVSV…VILLSNFGGQ (463 aa)). 8 cysteine pairs are disulfide-bonded: cysteine 113-cysteine 300, cysteine 223-cysteine 231, cysteine 277-cysteine 284, cysteine 389-cysteine 474, cysteine 411-cysteine 470, cysteine 415-cysteine 466, cysteine 424-cysteine 451, and cysteine 426-cysteine 440. The helical transmembrane segment at 552–572 (LGLWMSCSMVCVIEIIEVFFI) threads the bilayer. Over 573-669 (DSFSIVMRRR…LPDTLEGRSH (97 aa)) the chain is Cytoplasmic. The disordered stretch occupies residues 592 to 619 (DRKAPRPQEPPQVNAPAKEGHDNPVCTD).

The protein belongs to the amiloride-sensitive sodium channel (TC 1.A.6) family. SCNN1G subfamily. Component of the heterotrimeric epithelial sodium channel (ENaC) composed of an alpha/SCNN1A, a beta/SCNN1B and a gamma/SCNN1G subunit.

The protein resides in the apical cell membrane. The enzyme catalyses Na(+)(in) = Na(+)(out). With respect to regulation, originally identified and characterized by its inhibition by the diuretic drug amiloride. Its function is as follows. This is one of the three pore-forming subunits of the heterotrimeric epithelial sodium channel (ENaC), a critical regulator of sodium balance and fluid homeostasis. ENaC operates in epithelial tissues, where it mediates the electrodiffusion of sodium ions from extracellular fluid through the apical membrane of cells, with water following osmotically. The polypeptide is Epithelial sodium channel subunit gamma (Pelodiscus sinensis (Chinese softshell turtle)).